We begin with the raw amino-acid sequence, 347 residues long: Tyrosine recombinase XerC 2 (347 aa).

Residues 17–108 (LVLTRYMEAH…PLKTWFKWLA (92 aa)) form the Core-binding (CB) domain. The region spanning 125–313 (KLPKHLPRAI…SIEHLRAIHD (189 aa)) is the Tyr recombinase domain. Catalysis depends on residues arginine 170, lysine 195, histidine 265, arginine 268, and histidine 291. Residue tyrosine 300 is the O-(3'-phospho-DNA)-tyrosine intermediate of the active site.

Belongs to the 'phage' integrase family.

Its subcellular location is the cytoplasm. In terms of biological role, site-specific tyrosine recombinase, which acts by catalyzing the cutting and rejoining of the recombining DNA molecules. The chain is Tyrosine recombinase XerC 2 from Ralstonia nicotianae (strain ATCC BAA-1114 / GMI1000) (Ralstonia solanacearum).